We begin with the raw amino-acid sequence, 188 residues long: Ribosome-recycling factor (188 aa).

Belongs to the RRF family.

Its subcellular location is the cytoplasm. Its function is as follows. Responsible for the release of ribosomes from messenger RNA at the termination of protein biosynthesis. May increase the efficiency of translation by recycling ribosomes from one round of translation to another. The chain is Ribosome-recycling factor from Gluconacetobacter diazotrophicus (strain ATCC 49037 / DSM 5601 / CCUG 37298 / CIP 103539 / LMG 7603 / PAl5).